The sequence spans 309 residues: Porphobilinogen deaminase (309 aa).

Cysteine 242 bears the S-(dipyrrolylmethanemethyl)cysteine mark.

Belongs to the HMBS family. In terms of assembly, monomer. Dipyrromethane serves as cofactor.

The enzyme catalyses 4 porphobilinogen + H2O = hydroxymethylbilane + 4 NH4(+). It functions in the pathway porphyrin-containing compound metabolism; protoporphyrin-IX biosynthesis; coproporphyrinogen-III from 5-aminolevulinate: step 2/4. Functionally, tetrapolymerization of the monopyrrole PBG into the hydroxymethylbilane pre-uroporphyrinogen in several discrete steps. The protein is Porphobilinogen deaminase of Hamiltonella defensa subsp. Acyrthosiphon pisum (strain 5AT).